Reading from the N-terminus, the 556-residue chain is Formate--tetrahydrofolate ligase (556 aa).

Residue 65–72 (TPAGEGKS) participates in ATP binding.

The protein belongs to the formate--tetrahydrofolate ligase family.

It carries out the reaction (6S)-5,6,7,8-tetrahydrofolate + formate + ATP = (6R)-10-formyltetrahydrofolate + ADP + phosphate. The protein operates within one-carbon metabolism; tetrahydrofolate interconversion. This chain is Formate--tetrahydrofolate ligase, found in Streptococcus thermophilus (strain CNRZ 1066).